The primary structure comprises 213 residues: Immunoglobulin lambda-like polypeptide 1 (213 aa).

An N-terminal signal peptide occupies residues 1–37 (MRPGTGQGGLEAPGEPGPNLRQRWPLLLLGLAVVTHG). The segment at 97-108 (VFGSGTQLTVLS) is j region. Positions 109-213 (QPKATPSVTL…EKTVAPAECS (105 aa)) are c region. The Ig-like C1-type domain maps to 114-208 (PSVTLFPPSS…EGSTVEKTVA (95 aa)). A disulfide bond links Cys135 and Cys194.

As to quaternary structure, associates non-covalently with VPREB1. Interacts with SYNV1/HRD1 (via N-terminus); this interaction leads to increased IGLL1 ubiquitination and degradation in pre-B cells, possibly through a lysosomal, not proteasomal, pathway. As to expression, expressed only in pre-B-cells and a special B-cell line (which is surface Ig negative).

The protein resides in the endoplasmic reticulum. It localises to the secreted. Its function is as follows. Critical for B-cell development. This is Immunoglobulin lambda-like polypeptide 1 (IGLL1) from Homo sapiens (Human).